The primary structure comprises 130 residues: Small ribosomal subunit protein uS9 (130 aa).

It belongs to the universal ribosomal protein uS9 family.

This Buchnera aphidicola subsp. Acyrthosiphon pisum (strain 5A) protein is Small ribosomal subunit protein uS9.